Reading from the N-terminus, the 586-residue chain is Glutathione hydrolase 5 proenzyme (586 aa).

Residues 1 to 8 lie on the Cytoplasmic side of the membrane; sequence MARGYGAT. The helical; Signal-anchor for type II membrane protein transmembrane segment at 9–29 threads the bilayer; it reads VSLVLLGLGLALAVIVLAVVL. The Extracellular portion of the chain corresponds to 30 to 586; the sequence is SRHQAPCGPQ…LRKSGEAAGY (557 aa). The N-linked (GlcNAc...) asparagine glycan is linked to Asn-98. Arg-110 is an L-glutamate binding site. Asn-204, Asn-303, and Asn-347 each carry an N-linked (GlcNAc...) asparagine glycan. The active-site Nucleophile is Thr-388. L-glutamate-binding positions include Thr-406, Glu-427, and 469 to 470; that span reads SS. N-linked (GlcNAc...) asparagine glycans are attached at residues Asn-535 and Asn-550.

This sequence belongs to the gamma-glutamyltransferase family. As to quaternary structure, heterodimer composed of the light and heavy chains. The active site is located in the light chain. Post-translationally, cleaved by autocatalysis into a large and a small subunit. Glycosylated. As to expression, expressed in follicular dendritic cells in lymphoid follicles (at protein level).

It localises to the membrane. The enzyme catalyses glutathione + H2O = L-cysteinylglycine + L-glutamate. The catalysed reaction is an S-substituted glutathione + H2O = an S-substituted L-cysteinylglycine + L-glutamate. It carries out the reaction leukotriene C4 + H2O = leukotriene D4 + L-glutamate. It catalyses the reaction S-[(2E,6E,10E)-geranylgeranyl]-L-glutathione + H2O = S-[(2E,6E,10E)-geranylgeranyl]-L-cysteinylglycine + L-glutamate. The enzyme catalyses an N-terminal (5-L-glutamyl)-[peptide] + an alpha-amino acid = 5-L-glutamyl amino acid + an N-terminal L-alpha-aminoacyl-[peptide]. It participates in sulfur metabolism; glutathione metabolism. It functions in the pathway lipid metabolism; leukotriene D4 biosynthesis. Its activity is regulated as follows. Inhibited by serine-borate. Functionally, cleaves the gamma-glutamyl bond of extracellular glutathione tripeptide (gamma-Glu-Cys-Gly) and certain glutathione conjugates. Hydrolyzes glutathione releasing L-Glu and Cys-Gly dipeptide which is further metabolized to maintain extracellular cysteine levels but also to provide cysteine necessary for intracellular glutathione synthesis. Among glutathione-S-conjugates metabolizes leukotriene C4 (LTC4) and S-geranylgeranyl-glutathione (GGG), but is inactive toward gamma-glutamyl leucine. Converts extracellular LTC4 to LTD4 during acute inflammatory response. Acts as a negative regulator of GGG bioactivity. GGT5 (via GGG catabolism) and ABCC1 (via extracellular transport) establish GGG gradients within lymphoid tissues to position P2RY8-positive lymphocytes at germinal centers in lymphoid follicles and restrict their chemotactic transmigration from blood vessels to bone marrow parenchyma. The transpeptidation reaction, i.e. the transfer of gamma-glutamyl moiety to an acceptor molecule to yield a new gamma-glutamyl compound requires high concentration of dipeptide acceptor and is considered nonphysiological. This is Glutathione hydrolase 5 proenzyme (GGT5) from Homo sapiens (Human).